Consider the following 325-residue polypeptide: Tagatose 1,6-diphosphate aldolase 1 (325 aa).

Belongs to the aldolase LacD family.

The enzyme catalyses D-tagatofuranose 1,6-bisphosphate = D-glyceraldehyde 3-phosphate + dihydroxyacetone phosphate. It participates in carbohydrate metabolism; D-tagatose 6-phosphate degradation; D-glyceraldehyde 3-phosphate and glycerone phosphate from D-tagatose 6-phosphate: step 2/2. This Streptococcus pyogenes serotype M1 protein is Tagatose 1,6-diphosphate aldolase 1 (lacD1).